We begin with the raw amino-acid sequence, 309 residues long: uncharacterized protein (309 aa).

Basic residues predominate over residues 1–16; that stretch reads MAGNSRRRGAVRKAGT. Positions 1–70 are disordered; sequence MAGNSRRRGA…AKRTEETETV (70 aa). 3 residues coordinate S-adenosyl-L-methionine: Gly-261, Ile-281, and Leu-290.

This sequence belongs to the class IV-like SAM-binding methyltransferase superfamily. RNA methyltransferase TrmH family.

This is an uncharacterized protein from Mycolicibacterium paratuberculosis (strain ATCC BAA-968 / K-10) (Mycobacterium paratuberculosis).